Here is a 70-residue protein sequence, read N- to C-terminus: Large ribosomal subunit protein bL31 (70 aa).

4 residues coordinate Zn(2+): Cys-16, Cys-18, Cys-37, and Cys-40.

This sequence belongs to the bacterial ribosomal protein bL31 family. Type A subfamily. In terms of assembly, part of the 50S ribosomal subunit. Requires Zn(2+) as cofactor.

Binds the 23S rRNA. In Histophilus somni (strain 2336) (Haemophilus somnus), this protein is Large ribosomal subunit protein bL31.